We begin with the raw amino-acid sequence, 154 residues long: Putative pre-16S rRNA nuclease (154 aa).

It belongs to the YqgF nuclease family.

The protein resides in the cytoplasm. Could be a nuclease involved in processing of the 5'-end of pre-16S rRNA. This chain is Putative pre-16S rRNA nuclease, found in Rickettsia peacockii (strain Rustic).